Reading from the N-terminus, the 271-residue chain is DNA-directed RNA polymerase subunit Rpo3 (271 aa).

The protein belongs to the archaeal Rpo3/eukaryotic RPB3 RNA polymerase subunit family. Part of the RNA polymerase complex.

The protein resides in the cytoplasm. It carries out the reaction RNA(n) + a ribonucleoside 5'-triphosphate = RNA(n+1) + diphosphate. Its function is as follows. DNA-dependent RNA polymerase (RNAP) catalyzes the transcription of DNA into RNA using the four ribonucleoside triphosphates as substrates. The protein is DNA-directed RNA polymerase subunit Rpo3 of Thermoplasma volcanium (strain ATCC 51530 / DSM 4299 / JCM 9571 / NBRC 15438 / GSS1).